The sequence spans 319 residues: Sulfate adenylyltransferase subunit 2 (319 aa).

It belongs to the PAPS reductase family. CysD subfamily. In terms of assembly, heterodimer composed of CysD, the smaller subunit, and CysN.

The catalysed reaction is sulfate + ATP + H(+) = adenosine 5'-phosphosulfate + diphosphate. Its pathway is sulfur metabolism; hydrogen sulfide biosynthesis; sulfite from sulfate: step 1/3. Its function is as follows. With CysN forms the ATP sulfurylase (ATPS) that catalyzes the adenylation of sulfate producing adenosine 5'-phosphosulfate (APS) and diphosphate, the first enzymatic step in sulfur assimilation pathway. APS synthesis involves the formation of a high-energy phosphoric-sulfuric acid anhydride bond driven by GTP hydrolysis by CysN coupled to ATP hydrolysis by CysD. The sequence is that of Sulfate adenylyltransferase subunit 2 from Methylobacterium radiotolerans (strain ATCC 27329 / DSM 1819 / JCM 2831 / NBRC 15690 / NCIMB 10815 / 0-1).